We begin with the raw amino-acid sequence, 518 residues long: Histone deacetylase 1 (518 aa).

The interval 22 to 333 is histone deacetylase; the sequence is RRVCYFYDAE…WCYETGVALG (312 aa). The active-site Proton donor/acceptor is the His153. The Zn(2+) site is built by Asp188, His190, and Asp276. The disordered stretch occupies residues 387–518; that stretch reads HAPSVQFQER…QDQPSVHQKT (132 aa). Acidic residues predominate over residues 401-412; the sequence is ELPEQDEDQEDP. Positions 413-435 are enriched in basic and acidic residues; sequence DERHHADSDVEMDDVKPLDDSGR. Polar residues predominate over residues 503-518; sequence DNSNKLQDQPSVHQKT.

Belongs to the histone deacetylase family. HD Type 1 subfamily. Interacts with TPR3. It depends on Zn(2+) as a cofactor. Expressed in roots and leaves.

The protein resides in the nucleus. The enzyme catalyses N(6)-acetyl-L-lysyl-[histone] + H2O = L-lysyl-[histone] + acetate. Its function is as follows. Responsible for the deacetylation of lysine residues on the N-terminal part of the core histones (H2A, H2B, H3 and H4). Histone deacetylation gives a tag for epigenetic repression and plays an important role in transcriptional regulation, cell cycle progression and developmental events. Histone deacetylases act via the formation of large multiprotein complexes. Negatively regulates the expression of the NAC48/NAC6 gene that controls root growth in seedlings. Epigenetically represses the expression of NAC48/NAC6 by deacetylating 'Lys-9' (H3K9ac), 'Lys-14' (H3K14ac) and 'Lys-18' (H3K18ac) of histone H3, and 'Lys-5' (H4K5ac), 'Lys-12' (H4K12ac) and 'Lys-16' (H4K16ac) of histone H4. Functions in the regulation of gene expression in the whole genome. Acts as a chromatin remodeling regulator to promote the formation of a repressive chromatin state. Functions with MODD via its interaction with TPR3, to down-regulates the histone acetylation level at BZIP46 target genes. BZIP46 is a positive regulator of abscisic acid (ABA) signaling and drought stress tolerance. The protein is Histone deacetylase 1 of Oryza sativa subsp. japonica (Rice).